A 167-amino-acid polypeptide reads, in one-letter code: Thioredoxin Y2, chloroplastic (167 aa).

A chloroplast-targeting transit peptide spans 1–58; the sequence is MAISLATAYISPCFTPESSNSASPSRTLSSVRLPSQIRRFGSVQSPSSSTRFAPLTVR. The Thioredoxin domain occupies 59-164; that stretch reads AAKKQTFNSF…LVERIENSLQ (106 aa). Catalysis depends on nucleophile residues C88 and C91. C88 and C91 are joined by a disulfide.

Belongs to the thioredoxin family. Plant Y-type subfamily. Expressed in leaves.

Its subcellular location is the plastid. It is found in the chloroplast stroma. In terms of biological role, thiol-disulfide oxidoreductase that poorly activates chloroplastic malate dehydrogenase (NADP-MDH) and fructose-1,6-bisphosphatase. Provides reducing equivalents for peroxiredoxin Q. In Arabidopsis thaliana (Mouse-ear cress), this protein is Thioredoxin Y2, chloroplastic.